Reading from the N-terminus, the 61-residue chain is MAKKSMIVKALRKPKYKTRQKNRCKLCGRPKGYMRDFGMCRICFRNHASAGLIPGVSKSSW.

Zn(2+)-binding residues include Cys24, Cys27, Cys40, and Cys43.

The protein belongs to the universal ribosomal protein uS14 family. Zinc-binding uS14 subfamily. As to quaternary structure, part of the 30S ribosomal subunit. Contacts proteins S3 and S10. Requires Zn(2+) as cofactor.

Its function is as follows. Binds 16S rRNA, required for the assembly of 30S particles and may also be responsible for determining the conformation of the 16S rRNA at the A site. The chain is Small ribosomal subunit protein uS14 from Borrelia hermsii (strain HS1 / DAH).